The primary structure comprises 220 residues: Ribosomal RNA small subunit methyltransferase G (220 aa).

S-adenosyl-L-methionine is bound by residues glycine 78, leucine 83, and arginine 144.

Belongs to the methyltransferase superfamily. RNA methyltransferase RsmG family.

It is found in the cytoplasm. The catalysed reaction is guanosine(527) in 16S rRNA + S-adenosyl-L-methionine = N(7)-methylguanosine(527) in 16S rRNA + S-adenosyl-L-homocysteine. Specifically methylates the N7 position of guanine in position 527 of 16S rRNA. This chain is Ribosomal RNA small subunit methyltransferase G, found in Alkalilimnicola ehrlichii (strain ATCC BAA-1101 / DSM 17681 / MLHE-1).